We begin with the raw amino-acid sequence, 280 residues long: MSGLNLTVRVHPVVLFQVVDAFERRNADSHRVIGTLLGSVDKGVVEVTNCFCVPHKEHDDQVEAELSYALDMYDLNRKVNANENVVGWWATGNEVTNHSSVIHEYYARECNNPVHLTVDTSLQSGRMGLRAYICIQLGVPGGKTGCMFTPIPVELTSYEPETFGLKLLQKTVTVSPAHRPKTVAPMLDLAQISEAATKLQSLLDLILKYVDDVIAHKVTPDNAVGRQLLDLIHSVPHMTHEQFTQMFNANVRDLLMVITLSQLIKTQLQLNEKLTFLPTA.

Residues 8–138 (VRVHPVVLFQ…LRAYICIQLG (131 aa)) form the MPN domain.

The protein belongs to the eIF-3 subunit F family. In terms of assembly, component of the eukaryotic translation initiation factor 3 (eIF-3) complex. The eIF-3 complex interacts with pix.

Its subcellular location is the cytoplasm. Functionally, component of the eukaryotic translation initiation factor 3 (eIF-3) complex, which is involved in protein synthesis of a specialized repertoire of mRNAs and, together with other initiation factors, stimulates binding of mRNA and methionyl-tRNAi to the 40S ribosome. The eIF-3 complex specifically targets and initiates translation of a subset of mRNAs involved in cell proliferation. In Drosophila mojavensis (Fruit fly), this protein is Eukaryotic translation initiation factor 3 subunit F-1.